A 401-amino-acid chain; its full sequence is Aspartokinase (401 aa).

It belongs to the aspartokinase family.

It catalyses the reaction L-aspartate + ATP = 4-phospho-L-aspartate + ADP. It functions in the pathway amino-acid biosynthesis; L-lysine biosynthesis via DAP pathway; (S)-tetrahydrodipicolinate from L-aspartate: step 1/4. The protein operates within amino-acid biosynthesis; L-methionine biosynthesis via de novo pathway; L-homoserine from L-aspartate: step 1/3. Its pathway is amino-acid biosynthesis; L-threonine biosynthesis; L-threonine from L-aspartate: step 1/5. In Rickettsia conorii (strain ATCC VR-613 / Malish 7), this protein is Aspartokinase (lysC).